We begin with the raw amino-acid sequence, 173 residues long: NADH-quinone oxidoreductase subunit B 1 (173 aa).

4 residues coordinate [4Fe-4S] cluster: C42, C43, C107, and C137.

Belongs to the complex I 20 kDa subunit family. As to quaternary structure, NDH-1 is composed of 14 different subunits. Subunits NuoB, C, D, E, F, and G constitute the peripheral sector of the complex. [4Fe-4S] cluster is required as a cofactor.

The protein resides in the cell inner membrane. The enzyme catalyses a quinone + NADH + 5 H(+)(in) = a quinol + NAD(+) + 4 H(+)(out). Functionally, NDH-1 shuttles electrons from NADH, via FMN and iron-sulfur (Fe-S) centers, to quinones in the respiratory chain. The immediate electron acceptor for the enzyme in this species is believed to be ubiquinone. Couples the redox reaction to proton translocation (for every two electrons transferred, four hydrogen ions are translocated across the cytoplasmic membrane), and thus conserves the redox energy in a proton gradient. This chain is NADH-quinone oxidoreductase subunit B 1, found in Anaeromyxobacter sp. (strain K).